Reading from the N-terminus, the 447-residue chain is UPF0210 protein LSL_0162 (447 aa).

Belongs to the UPF0210 family. As to quaternary structure, homodimer.

The sequence is that of UPF0210 protein LSL_0162 from Ligilactobacillus salivarius (strain UCC118) (Lactobacillus salivarius).